Consider the following 81-residue polypeptide: Mipartoxin-1 (81 aa).

A signal peptide spans 1–21 (MKTLLLTLVVVTIVCLDLGNS). 4 cysteine pairs are disulfide-bonded: cysteine 24/cysteine 42, cysteine 35/cysteine 61, cysteine 65/cysteine 73, and cysteine 74/cysteine 79.

Belongs to the three-finger toxin family. Short-chain subfamily. Contains 4 disulfide bonds. In terms of tissue distribution, expressed by the venom gland.

Its subcellular location is the secreted. In terms of biological role, snake venom neurotoxin that blocks neuromuscular transmission on both avian and mouse nerve-muscle preparations, presenting a postsynaptic action through the nicotinic acetylcholine receptor (nAChR). Reversibly inhibits twitches in mouse phrenic nerve diaphragm and irreversibly in chick biventer cervicis muscle. Has no cytotoxic activity towards C2C12 cells up to 180 ug/ml. The sequence is that of Mipartoxin-1 from Micrurus mipartitus (Red-tailed coral snake).